The following is a 112-amino-acid chain: Ribosome-binding factor A (112 aa).

It belongs to the RbfA family. As to quaternary structure, monomer. Binds 30S ribosomal subunits, but not 50S ribosomal subunits or 70S ribosomes.

Its subcellular location is the cytoplasm. Functionally, one of several proteins that assist in the late maturation steps of the functional core of the 30S ribosomal subunit. Associates with free 30S ribosomal subunits (but not with 30S subunits that are part of 70S ribosomes or polysomes). Required for efficient processing of 16S rRNA. May interact with the 5'-terminal helix region of 16S rRNA. This Ruthia magnifica subsp. Calyptogena magnifica protein is Ribosome-binding factor A.